The following is a 1473-amino-acid chain: NACHT, LRR and PYD domains-containing protein 1 (1473 aa).

The Pyrin domain maps to 1–92 (MAGGAWGRLA…CAQAQEGAGH (92 aa)). The interval 90 to 113 (AGHSPSFPYSPSEPHLGSPSQPTS) is disordered. 3 positions are modified to phosphoserine; by MAPK11 and MAPK14: Ser-93, Ser-99, and Ser-101. Ser-107 is subject to Phosphoserine; by MAPK14. The ZAKalpha motif 1 motif lies at 111-117 (PTSTAVL). Thr-112 carries the post-translational modification Phosphothreonine; by MAPK11, MAPK14 and MAP3K20. Position 113 is a phosphoserine; by MAP3K20 (Ser-113). Residues Thr-114 and Thr-129 each carry the phosphothreonine; by MAP3K20 modification. Ser-132 bears the Phosphoserine; by MAP3K20 mark. The tract at residues 160–254 (LPSSPDHESP…HTSLQPHHHP (95 aa)) is disordered. Residue Ser-163 is modified to Phosphoserine; by MAPK14. The residue at position 168 (Ser-168) is a Phosphoserine; by MAPK11 and MAPk14. Phosphoserine; by MAPK11 and MAPK14 is present on Ser-170. A compositionally biased stretch (polar residues) spans 170–182 (SQESPNAPTSTAV). Ser-173 is modified (phosphoserine; by MAPK11). The short motif at 177-183 (PTSTAVL) is the ZAKalpha motif 2 element. Thr-178 carries the phosphothreonine; by MAPK11 modification. Phosphoserine; by MAPK11 and MAP3K20 is present on Ser-179. Thr-180 carries the post-translational modification Phosphothreonine; by MAPK11 and MAP3K20. Over residues 218-231 (EIREREREKSEKGR) the composition is skewed to basic and acidic residues. In terms of domain architecture, NACHT spans 328-637 (RIVILQGAAG…EFFAAMSYVL (310 aa)). ATP is bound at residue 334-341 (GAAGIGKS). LRR repeat units follow at residues 809–830 (NLKELDLSGNSLSHSAVKSLCK), 838–858 (LLETLRLAGCGLTAEDCKDLA), 866–887 (TLTELDLSFNVLTDAGAKHLCQ), 895–915 (KLQRLQLVSCGLTSDCCQDLA), 923–944 (SLKELDLQQNNLDDVGVRLLCE), and 950–973 (ACKLIRLGLDQTTLSDEMRQELRA). Positions 991–1017 (VMTPTEGLDTGEMSNSTSSLKRQRLGS) are disordered. Residues 1079–1212 (FWGPTGPVAT…HHIVLENPSF (134 aa)) form a ZU5 region. Positions 1079 to 1364 (FWGPTGPVAT…LMPATTLIPP (286 aa)) constitute an FIIND domain. A UPA region spans residues 1213-1364 (SPLGVLLKMI…LMPATTLIPP (152 aa)). A CARD domain is found at 1374-1463 (DAPQLLHFVD…HLIMELWEKG (90 aa)).

It belongs to the NLRP family. As to quaternary structure, interacts (via LRR repeats) with BCL2 and BCL2L1 (via the loop between motifs BH4 and BH3); these interactions reduce NLRP1 inflammasome-induced CASP1 activation and IL1B release, possibly by impairing NLRP1 interaction with PYCARD. Interacts with NOD2; this interaction is enhanced in the presence of muramyl dipeptide (MDP) and increases IL1B release. Interacts with EIF2AK2/PKR; this interaction requires EIF2AK2 activity, is accompanied by EIF2AK2 autophosphorylation and promotes inflammasome assembly in response to danger-associated signals. Interacts with MEFV; this interaction targets NLRP1 to degradation by autophagy, hence preventing excessive IL1B- and IL18-mediated inflammation. Binds (via LRR domain) to dsDNA and dsRNA. Interacts with DPP9; leading to inhibit activation of the inflammasome. DPP9 acts via formation of a ternary complex, composed of a DPP9 homodimer, one full-length NLRP1 protein, and one cleaved C-terminus of NLRP1 (NACHT, LRR and PYD domains-containing protein 1, C-terminus). Interacts with DPP8; leading to inhibit activation of the inflammasome, probably via formation of a ternary complex with DPP8. In terms of assembly, interacts with the C-terminal part of NLRP1 (NACHT, LRR and PYD domains-containing protein 1, C-terminus) in absence of pathogens and other damage-associated signals. Interacts with the N-terminal part of NLRP1 (NACHT, LRR and PYD domains-containing protein 1, N-terminus) in absence of pathogens and other damage-associated signals. Homomultimer; forms the NLRP1 inflammasome polymeric complex, a filament composed of homopolymers of this form in response to pathogens and other damage-associated signals. The NLRP1 inflammasome polymeric complex associates with PYCARD/ASC. Interacts (via CARD domain) with PYCARD/ASC (via CARD domain); leading to pro-caspase-1 (proCASP1) recruitment. Pro-caspase-1 (proCASP1) filament formation increases local enzyme concentration, resulting in trans-autocleavage and activation. Active CASP1 then processes IL1B and IL18 precursors, leading to the release of mature cytokines in the extracellular milieu and inflammatory response. As to quaternary structure, (Microbial infection) Interacts with vaccinia virus protein F1. In terms of assembly, (Microbial infection) Interacts with human herpes virus 8/HHV-8 proteins ORF45; relieving autoinhibition of the NLRP1 inflammasome. Autocatalytically cleaved. Autocatalytic cleavage in FIIND region occurs constitutively, prior to activation signals, and is required for inflammasome activity (IL1B release), possibly by facilitating CASP1 binding. Both N- and C-terminal parts remain associated non-covalently. In terms of processing, ubiquitinated by the cullin:ZER1/ZYG11B complex in response to pathogen-associated signals, leading to its degradation by the proteasome and subsequent release of the cleaved C-terminal part of the protein (NACHT, LRR and PYD domains-containing protein 1, C-terminus), which polymerizes and forms the NLRP1 inflammasome. Post-translationally, phosphorylated by MAP3K20 isoform ZAKalpha, MAPK11 and MAPK14 in response to UV-B irradiation and ribosome collisions, promoting activation of the NLRP1 inflammasome and pyroptosis. (Microbial infection) Cleaved between Gln-130 and Gly-131 by the Protease 3C from various human enteroviruses and rhinoviruses (EV68, EV71, Coxsackievirus B3, HRV-14 and HRV-16). This cleavage triggers N-glycine-mediated proteasomal degradation of the autoinhibitory NLRP1 N-terminal fragment via the cullin:ZER1/ZYG11B complex which liberates the activating C-terminal fragment and activates NLRP1 inflammasome. In terms of processing, (Microbial infection) Cleaved between Gln-333 and Gly-334 by the 3C-like proteinase nsp5 from human coronavirus SARS-CoV-2. This cleavage liberates the activating C-terminal fragment and activates NLRP1 inflammasome, leading to downstream activation of GSDME and lung epithelial cell death. In terms of tissue distribution, widely expressed. Abundantly expressed in primary immune cells (isoform 1 and isoform 2), including in neutrophils, monocytes/macrophages, dendritic cells (mostly Langerhans cells), and B- and T-lymphocytes (at protein level). Strongly expressed in epithelial cells lining the glandular epithelium, such as that of the gastrointestinal tract (stomach, small intestine, colon), the respiratory tract (trachea and bronchi), and the endometrial and endocervical glands, gallbladder, prostate, and breast (at protein level). In testis, expressed in spermatogonia and primary spermatocytes, but not in Sertoli cells (at protein level). In the brain, expressed in neurons, in particular in pyramidal ones and in oligodendrocytes, but not detected in microglia (at protein level). Expressed in adult and fetal ocular tissues, including in adult and 24-week old fetal choroid, sclera, cornea, and optic nerve, as well as in adult retina and fetal retina/retinal pigment epithelium. Highly expressed in the skin throughout the epidermis and in dermal fibroblasts, in both glabrous skin and plantar skin. It is detected in keratinocytes, but not in melanocytes. Expressed in epidermal appendages such as hair follicles.

The protein localises to the cytoplasm. It localises to the cytosol. The protein resides in the nucleus. It is found in the inflammasome. It catalyses the reaction ATP + H2O = ADP + phosphate + H(+). With respect to regulation, NLRP1 inflammasome is activated by cleavage by the Protease 3C from various human enteroviruses and rhinoviruses (EV68, EV71, Coxsackievirus B3, HRV-14 and HRV-16): cleavage promotes ubiquitination and degradation of the N-terminal part, releasing the cleaved C-terminal part of the protein (NACHT, LRR and PYD domains-containing protein 1, C-terminus), which polymerizes and forms the NLRP1 inflammasome. Activated double-stranded RNA: positive-strand RNA viruses such as Semliki forest virus and long dsRNA activate the NLRP1 inflammasome. In contrast to its mouse ortholog, not activated by Bacillus anthracis lethal toxin. NLRP1 inflammasome is inhibited by DPP8 and DPP9, which sequester the C-terminal fragment of NLRP1 (NACHT, LRR and PYD domains-containing protein 1, C-terminus) in a ternary complex, thereby preventing NLRP1 oligomerization and activation. NLRP1 inflammasome is activated by Val-boroPro (Talabostat, PT-100), an inhibitor of dipeptidyl peptidases DPP8 and DPP9. Val-boroPro relieves inhibition of DPP8 and/or DPP9 by promoting disruption of the ternary complex, releasing its C-terminal part from autoinhibition. ATPase activity is activated by dsRNA-binding but not dsDNA-binding. (Microbial infection) The NLRP1 inflammasome is activated by human herpes virus 8/HHV-8 protein ORF45, which interacts with the N-terminal part of NLRP1 and promotes its translocation into the nucleus, relieving autoinhibition and leading to activation. Its activity is regulated as follows. (Microbial infection) NLRP1 inflammasome is activated by cleavage by the 3C-like proteinase nsp5 from human coronavirus SARS-CoV-2. Functionally, acts as the sensor component of the NLRP1 inflammasome, which mediates inflammasome activation in response to various pathogen-associated signals, leading to subsequent pyroptosis. Inflammasomes are supramolecular complexes that assemble in the cytosol in response to pathogens and other damage-associated signals and play critical roles in innate immunity and inflammation. Acts as a recognition receptor (PRR): recognizes specific pathogens and other damage-associated signals, such as cleavage by some human enteroviruses and rhinoviruses, double-stranded RNA, UV-B irradiation, or Val-boroPro inhibitor, and mediates the formation of the inflammasome polymeric complex composed of NLRP1, CASP1 and PYCARD/ASC. In response to pathogen-associated signals, the N-terminal part of NLRP1 is degraded by the proteasome, releasing the cleaved C-terminal part of the protein (NACHT, LRR and PYD domains-containing protein 1, C-terminus), which polymerizes and associates with PYCARD/ASC to initiate the formation of the inflammasome complex: the NLRP1 inflammasome recruits pro-caspase-1 (proCASP1) and promotes caspase-1 (CASP1) activation, which subsequently cleaves and activates inflammatory cytokines IL1B and IL18 and gasdermin-D (GSDMD), leading to pyroptosis. In the absence of GSDMD expression, the NLRP1 inflammasome is able to recruit and activate CASP8, leading to activation of gasdermin-E (GSDME). Activation of NLRP1 inflammasome is also required for HMGB1 secretion; the active cytokines and HMGB1 stimulate inflammatory responses. Binds ATP and shows ATPase activity. Plays an important role in antiviral immunity and inflammation in the human airway epithelium. Specifically recognizes a number of pathogen-associated signals: upon infection by human rhinoviruses 14 and 16 (HRV-14 and HRV-16), NLRP1 is cleaved and activated which triggers NLRP1-dependent inflammasome activation and IL18 secretion. Positive-strand RNA viruses, such as Semliki forest virus and long dsRNA activate the NLRP1 inflammasome, triggering IL1B release in a NLRP1-dependent fashion. Acts as a direct sensor for long dsRNA and thus RNA virus infection. May also be activated by muramyl dipeptide (MDP), a fragment of bacterial peptidoglycan, in a NOD2-dependent manner. The NLRP1 inflammasome is also activated in response to UV-B irradiation causing ribosome collisions: ribosome collisions cause phosphorylation and activation of NLRP1 in a MAP3K20-dependent manner, leading to pyroptosis. In terms of biological role, constitutes the precursor of the NLRP1 inflammasome, which mediates autoproteolytic processing within the FIIND domain to generate the N-terminal and C-terminal parts, which are associated non-covalently in absence of pathogens and other damage-associated signals. Regulatory part that prevents formation of the NLRP1 inflammasome: in absence of pathogens and other damage-associated signals, interacts with the C-terminal part of NLRP1 (NACHT, LRR and PYD domains-containing protein 1, C-terminus), preventing activation of the NLRP1 inflammasome. In response to pathogen-associated signals, this part is ubiquitinated and degraded by the proteasome, releasing the cleaved C-terminal part of the protein, which polymerizes and forms the NLRP1 inflammasome. Its function is as follows. Constitutes the active part of the NLRP1 inflammasome. In absence of pathogens and other damage-associated signals, interacts with the N-terminal part of NLRP1 (NACHT, LRR and PYD domains-containing protein 1, N-terminus), preventing activation of the NLRP1 inflammasome. In response to pathogen-associated signals, the N-terminal part of NLRP1 is degraded by the proteasome, releasing this form, which polymerizes and associates with PYCARD/ASC to form of the NLRP1 inflammasome complex: the NLRP1 inflammasome complex then directly recruits pro-caspase-1 (proCASP1) and promotes caspase-1 (CASP1) activation, leading to gasdermin-D (GSDMD) cleavage and subsequent pyroptosis. Functionally, it is unclear whether is involved in inflammasome formation. It is not cleaved within the FIIND domain, does not assemble into specks, nor promote IL1B release. However, in an vitro cell-free system, it has been shown to be activated by MDP. In Homo sapiens (Human), this protein is NACHT, LRR and PYD domains-containing protein 1.